The primary structure comprises 134 residues: Small ribosomal subunit protein uS9 (134 aa).

A disordered region spans residues 109-134 (DARRTEPHKPSKSSKGPRARRQKSYR). Over residues 118-134 (PSKSSKGPRARRQKSYR) the composition is skewed to basic residues.

It belongs to the universal ribosomal protein uS9 family.

The protein is Small ribosomal subunit protein uS9 of Methanococcus vannielii (strain ATCC 35089 / DSM 1224 / JCM 13029 / OCM 148 / SB).